The chain runs to 200 residues: Small ribosomal subunit protein uS4 (200 aa).

The interval 22–42 (TGKELEKRPYAPGPHGPGQRK) is disordered. Residues 92 to 155 (ARLDNVVYKL…RNLSIIKESV (64 aa)) form the S4 RNA-binding domain.

Belongs to the universal ribosomal protein uS4 family. In terms of assembly, part of the 30S ribosomal subunit. Contacts protein S5. The interaction surface between S4 and S5 is involved in control of translational fidelity.

In terms of biological role, one of the primary rRNA binding proteins, it binds directly to 16S rRNA where it nucleates assembly of the body of the 30S subunit. Functionally, with S5 and S12 plays an important role in translational accuracy. The protein is Small ribosomal subunit protein uS4 of Bacillus velezensis (strain DSM 23117 / BGSC 10A6 / LMG 26770 / FZB42) (Bacillus amyloliquefaciens subsp. plantarum).